The sequence spans 543 residues: Cysteine/serine-rich nuclear protein 2 (543 aa).

Met-1 bears the N-acetylmethionine mark. 3 disordered regions span residues 1–51 (MDAF…SFTP), 281–305 (KRQVSRPAAPDEEPSPTASCSLTGA), and 488–543 (DCNP…PLAV). The segment covering 31-40 (SSDSADSCDS) has biased composition (low complexity). 2 stretches are compositionally biased toward polar residues: residues 42-51 (NPPTTASFTP) and 296-305 (PTASCSLTGA).

Belongs to the AXUD1 family.

It localises to the nucleus. Functionally, binds to the consensus sequence 5'-AGAGTG-3' and has transcriptional activator activity. May play a role in apoptosis. In Homo sapiens (Human), this protein is Cysteine/serine-rich nuclear protein 2 (CSRNP2).